A 639-amino-acid chain; its full sequence is Developmental regulatory protein wetA (639 aa).

4 disordered regions span residues 65–97 (MDPSHHHHHPHHHAHGESSTTSSGVSNADEFDF), 206–369 (TTMR…SAAS), 418–552 (GLLI…SADE), and 587–613 (LMTGVAPSGSSKTKARREKEAQERRRR). Over residues 69–78 (HHHHHPHHHA) the composition is skewed to basic residues. Polar residues-rich tracts occupy residues 81-90 (ESSTTSSGVS) and 214-226 (VSQTLQRAVSPSM). Positions 246–255 (RGRRAHRAHT) are enriched in basic residues. Low complexity-rich tracts occupy residues 256–275 (QHALQHQQQQHQHQQQQAHQ), 346–369 (QQQWQQQQQQQHNGAQQHQWSAAS), and 506–526 (HSSGGSAASSSQRSASGRVSV).

This sequence belongs to the wetA family.

Functionally, brlA, abaA and wetA are pivotal regulators of conidiophore development and conidium maturation. They act individually and together to regulate their own expression and that of numerous other sporulation-specific genes. Acts as a crucial regulator of both conidiation capacity and conidial quality. Plays a role in virulence. The chain is Developmental regulatory protein wetA from Beauveria bassiana (strain ARSEF 2860) (White muscardine disease fungus).